The following is a 1158-amino-acid chain: Serine/threonine/tyrosine-interacting-like protein 2 (1158 aa).

Disordered regions lie at residues 1 to 21, 280 to 303, 315 to 337, 360 to 392, 407 to 444, 492 to 527, 559 to 582, 597 to 622, 873 to 915, and 940 to 1135; these read MATR…DEAN, EERE…GTGS, EEED…QASK, LLSD…VERI, GYRR…ESVS, SRRY…GSEA, KDLG…KNPS, QKKV…LAKK, KVKE…CSSL, and SGLR…MDDE. Residues 8-19 show a composition bias toward acidic residues; the sequence is EEEQVVPSEEDE. One can recognise a Tyrosine-protein phosphatase domain in the interval 132–280; sequence NEVDEVWPNV…LRELNEKLME (149 aa). Over residues 322 to 337 the composition is skewed to polar residues; sequence SHLSGSSLGKATQASK. S377 carries the post-translational modification Phosphoserine. T433 carries the phosphothreonine modification. Residues 435-444 show a composition bias toward low complexity; the sequence is SESSAWESVS. The span at 500-517 shows a compositional bias: basic and acidic residues; it reads KREEAADRSSEAGSRVRE. Phosphoserine is present on S509. Over residues 600 to 619 the composition is skewed to basic and acidic residues; it reads VGSENKEEVVELSKGEDSAL. A compositionally biased stretch (acidic residues) spans 877–890; that stretch reads DEDDGVGDGDEDTD. Polar residues-rich tracts occupy residues 897–914 and 952–966; these read RYSS…TCSS and SDWS…TRSS. Over residues 974–983 the composition is skewed to low complexity; the sequence is KSSSYKFSKS. S985 carries the post-translational modification Phosphoserine. A compositionally biased stretch (polar residues) spans 990 to 999; the sequence is TSSYHEANGN. Residues 1000 to 1012 show a composition bias toward low complexity; that stretch reads SVRSTSRFSSSST. Residue S1036 is modified to Phosphoserine. Composition is skewed to basic and acidic residues over residues 1044-1056, 1064-1079, and 1094-1111; these read RTPE…ESPE, RSRD…KSDF, and RSEE…EEGR. Acidic residues predominate over residues 1126–1135; that stretch reads REEEEEMDDE.

This sequence belongs to the protein-tyrosine phosphatase family. Non-receptor class dual specificity subfamily.

It is found in the cytoplasm. It localises to the myofibril. Its subcellular location is the sarcomere. Functionally, may be required for myofiber maturation. This chain is Serine/threonine/tyrosine-interacting-like protein 2, found in Homo sapiens (Human).